A 310-amino-acid chain; its full sequence is Vomeronasal type-1 receptor 101 (310 aa).

Residues 1–19 (MNKVNILPSDTNMKITLFS) are Extracellular-facing. Residues 20–40 (ELSVGISANSILFFAHLCMFF) traverse the membrane as a helical segment. At 41–49 (EENRSKPID) the chain is on the cytoplasmic side. A helical membrane pass occupies residues 50-70 (LCIAFLSLTQLMLLVTMGLIA). Over 71-93 (ADMFMAQGIWDITTCRSLIYFHR) the chain is Extracellular. The cysteines at positions 85 and 172 are disulfide-linked. Residues 94 to 114 (LLRGFNLCAACLLHILWTFTL) form a helical membrane-spanning segment. The Cytoplasmic segment spans residues 115-134 (SPRSSCLTKFKHKSPHHISG). The helical transmembrane segment at 135–155 (AYLFFCVLYMSFSSHLFVLVI) threads the bilayer. At 156 to 193 (ATSNLTSDHFMYVTQSCSLLPMSYSRTSTFSLLMVTRE) the chain is on the extracellular side. Residue asparagine 159 is glycosylated (N-linked (GlcNAc...) asparagine). The chain crosses the membrane as a helical span at residues 194-214 (VFLISLMALSSGYMVTLLWRH). Residues 215-238 (KKQAQHLHSTRLSSKASPQQRATR) are Cytoplasmic-facing. A helical transmembrane segment spans residues 239–259 (TILLLMTFFVVFYILGTVIFH). The Extracellular portion of the chain corresponds to 260-268 (SRTKFKDGS). A helical membrane pass occupies residues 269–289 (IFYCVQIIVSHSYATISPFVF). Residues 290-310 (VFSEKRIIKFFRSMCGRIVNT) are Cytoplasmic-facing.

It belongs to the G-protein coupled receptor 1 family. As to expression, expressed in 1-4% of neurons of the vomeronasal organ. Only one pheromone receptor gene may be expressed in a particular neuron. Not expressed in the main olfactory epithelium.

It localises to the cell membrane. Functionally, putative pheromone receptor implicated in the regulation of social as well as reproductive behavior. This Rattus norvegicus (Rat) protein is Vomeronasal type-1 receptor 101 (Vom1r101).